The primary structure comprises 554 residues: MFCIQCEQTIRTPAGNGCSYSQGMCGKLAATSDLQDLLIYMLQGVSVYAVKARELGIIDAEIDSFVPKAFFSTLTNVNFDDERIMAYAQQAAKYRTQLKASYEAACEQAGIVAEQVPQVAQLVLGTSKIEMLAQAPIALLNKDKHNVHEDIMGLRLLCLYGLKGAAAYMEHARVLGQTDADVAGSFHEIMSFLGEPSVDGDKLFTTAMDIGQLNYRIMAMLDAGETQAFGHPEPTVVNTKSVKGKAILVSGHDMKDLELILEQTVGKGINVFTHGEMLPALAYPAFKKYPHLVGNYGSAWQNQQQEFANFPGAVVMTSNCIIDPNVGSYSDRIFTRSIVGWPGVVHIEGDDFSAVIDKALALEGFIYDEIPHTITIGFARNALMAAAPAVVENVKSGAIKHFFLVGGCDGDKADRSYFTELAKSTPKDSLILTLGCGKYKFNKLEFGDINGIPRLLDVGQCNDAYSAIQLAIALAEVFECDINELPLSLVLSWFEQKAIVVLLTLLSLGVKNIRTGPTPPAFLTANLAKILEEKFGLRNTTTVEADLKTMLNVA.

[2Fe-2S] cluster contacts are provided by Cys3, Cys6, Cys18, and Cys25. Positions 252, 276, 320, 408, 436, 461, 495, and 497 each coordinate hybrid [4Fe-2O-2S] cluster. Cys408 carries the cysteine persulfide modification.

It belongs to the HCP family. Requires [2Fe-2S] cluster as cofactor. It depends on hybrid [4Fe-2O-2S] cluster as a cofactor.

It is found in the cytoplasm. It catalyses the reaction A + NH4(+) + H2O = hydroxylamine + AH2 + H(+). Its function is as follows. Catalyzes the reduction of hydroxylamine to form NH(3) and H(2)O. The sequence is that of Hydroxylamine reductase from Shewanella baltica (strain OS223).